A 172-amino-acid polypeptide reads, in one-letter code: Adenine phosphoribosyltransferase (172 aa).

The protein belongs to the purine/pyrimidine phosphoribosyltransferase family. As to quaternary structure, homodimer.

Its subcellular location is the cytoplasm. It catalyses the reaction AMP + diphosphate = 5-phospho-alpha-D-ribose 1-diphosphate + adenine. It functions in the pathway purine metabolism; AMP biosynthesis via salvage pathway; AMP from adenine: step 1/1. Functionally, catalyzes a salvage reaction resulting in the formation of AMP, that is energically less costly than de novo synthesis. The protein is Adenine phosphoribosyltransferase of Roseiflexus sp. (strain RS-1).